Consider the following 118-residue polypeptide: Urease subunit beta (118 aa).

It belongs to the urease beta subunit family. As to quaternary structure, heterotrimer of UreA (gamma), UreB (beta) and UreC (alpha) subunits. Three heterotrimers associate to form the active enzyme.

It is found in the cytoplasm. The enzyme catalyses urea + 2 H2O + H(+) = hydrogencarbonate + 2 NH4(+). Its pathway is nitrogen metabolism; urea degradation; CO(2) and NH(3) from urea (urease route): step 1/1. In Aliivibrio fischeri (strain ATCC 700601 / ES114) (Vibrio fischeri), this protein is Urease subunit beta.